The following is a 363-amino-acid chain: UV excision repair protein RAD23 homolog A (363 aa).

The Ubiquitin-like domain maps to 1-81 (MAVTITLKTL…VVVMVTKTKA (81 aa)). Positions 81–160 (AGQGTSAPPE…EDAASTLVTG (80 aa)) are disordered. Residues 85–103 (TSAPPEASPTAAPESSTSF) show a composition bias toward low complexity. Lys122 participates in a covalent cross-link: Glycyl lysine isopeptide (Lys-Gly) (interchain with G-Cter in ubiquitin). Residues Ser123, Ser128, Ser133, Ser136, and Ser138 each carry the phosphoserine modification. The span at 126 to 147 (EESAPTTSPESVSGSVPSSGSS) shows a compositional bias: low complexity. The UBA 1 domain occupies 161–201 (SEYETMLTEIMSMGYERERVVAALRASYNNPHRAVEYLLTG). The segment at 203–227 (PGSPEPEHGSVQESQVSEQPATEAA) is disordered. Ser205 is modified (phosphoserine). Over residues 213–222 (VQESQVSEQP) the composition is skewed to polar residues. 2 positions are modified to phosphoserine: Ser295 and Ser357. A UBA 2 domain is found at 318 to 358 (PQEKEAIERLKALGFPESLVIQAYFACEKNENLAANFLLSQ). The segment at 319-363 (QEKEAIERLKALGFPESLVIQAYFACEKNENLAANFLLSQNFDDE) is HIV-1 vpr binding.

Belongs to the RAD23 family. As to quaternary structure, interacts with XPC; the interaction is suggesting the existence of a functional equivalent variant XPC complex. Interacts with PSMD4 and PSMC5. Interacts with ATXN3. Interacts with UBQLN2. In terms of assembly, (Microbial infection) Interacts with HIV-1 Vpr.

The protein localises to the nucleus. Multiubiquitin chain receptor involved in modulation of proteasomal degradation. Binds to 'Lys-48'-linked polyubiquitin chains in a length-dependent manner and with a lower affinity to 'Lys-63'-linked polyubiquitin chains. Proposed to be capable to bind simultaneously to the 26S proteasome and to polyubiquitinated substrates and to deliver ubiquitinated proteins to the proteasome. Its function is as follows. Involved in nucleotide excision repair and is thought to be functional equivalent for RAD23B in global genome nucleotide excision repair (GG-NER) by association with XPC. In vitro, the XPC:RAD23A dimer has NER activity. Can stabilize XPC. Functionally, (Microbial infection) Involved in Vpr-dependent replication of HIV-1 in non-proliferating cells and primary macrophages. Required for the association of HIV-1 Vpr with the host proteasome. In Homo sapiens (Human), this protein is UV excision repair protein RAD23 homolog A (RAD23A).